Reading from the N-terminus, the 359-residue chain is Peptide chain release factor 1 (359 aa).

At glutamine 235 the chain carries N5-methylglutamine. A disordered region spans residues 287–312 (AQEASAMRSAQVGSGDRSERIRTYNF).

Belongs to the prokaryotic/mitochondrial release factor family. Methylated by PrmC. Methylation increases the termination efficiency of RF1.

The protein localises to the cytoplasm. In terms of biological role, peptide chain release factor 1 directs the termination of translation in response to the peptide chain termination codons UAG and UAA. The sequence is that of Peptide chain release factor 1 from Chlamydia trachomatis serovar L2 (strain ATCC VR-902B / DSM 19102 / 434/Bu).